We begin with the raw amino-acid sequence, 59 residues long: Large ribosomal subunit protein bL32 (59 aa).

Residues 1–23 form a disordered region; sequence MAVQQNKKSPSKRGMHRSHDFLT.

Belongs to the bacterial ribosomal protein bL32 family.

This chain is Large ribosomal subunit protein bL32, found in Burkholderia multivorans (strain ATCC 17616 / 249).